The sequence spans 829 residues: GTPase-activating protein GYP5 (829 aa).

Residues 1–243 (MVEAGAKISK…VPPPLSEELK (243 aa)) form a disordered region. Positions 38–50 (AEHETQDSAKAQE) are enriched in basic and acidic residues. The segment covering 101–115 (TAAAAGALPGIGRAR) has biased composition (low complexity). Basic and acidic residues-rich tracts occupy residues 142–151 (KDAKISERAE) and 189–220 (KQAE…DDLP). Residues 279–341 (INRLRVNAQE…DEEEEEMRKI (63 aa)) are a coiled coil. The region spanning 371 to 550 (GIPKQIRGII…RILDVIFVEG (180 aa)) is the Rab-GAP TBC domain. 2 disordered regions span residues 600–620 (GKED…SKSS) and 790–812 (LKKN…PRVR). Residues 666–803 (FQREAQYEEM…RANTSVEHGE (138 aa)) adopt a coiled-coil conformation. Residues 800 to 811 (EHGEDSSSEPRV) show a composition bias toward basic and acidic residues.

Belongs to the GYP5 family.

The protein localises to the cytoplasm. In terms of biological role, GTPase-activating protein which accelerates the GTP hydrolysis rate of several GTPases. Involved in ER to Golgi trafficking and polarized exocytosis. This Eremothecium gossypii (strain ATCC 10895 / CBS 109.51 / FGSC 9923 / NRRL Y-1056) (Yeast) protein is GTPase-activating protein GYP5 (GYP5).